The primary structure comprises 36 residues: GVQISQISSFPTTADVSYDFNITNALGGIQPVGSLK.

It belongs to the glycosyl hydrolase 12 (cellulase H) family.

Its subcellular location is the secreted. It is found in the extracellular space. The catalysed reaction is Endohydrolysis of (1-&gt;4)-beta-D-glucosidic linkages in cellulose, lichenin and cereal beta-D-glucans.. In terms of biological role, has carboxymethylcellulase activity. The polypeptide is Endoglucanase Cel12A (Gloeophyllum trabeum (Brown rot fungus)).